The primary structure comprises 757 residues: RNA-directed RNA polymerase catalytic subunit (757 aa).

Positions 50 to 71 (SEKGKWKTNTETGAPQLNPIDG) are disordered. 2 consecutive short sequence motifs (nuclear localization signal) follow at residues 187–195 (RKRRVRDNM) and 203–216 (RTIGKKKQRLNKRS). The promoter-binding site stretch occupies residues 249 to 256 (RGFVYFVE). A RdRp catalytic domain is found at 286 to 483 (VRKMMTNSQD…GINMSKKKSY (198 aa)).

Belongs to the influenza viruses polymerase PB1 family. Influenza RNA polymerase is composed of three subunits: PB1, PB2 and PA. Interacts (via N-terminus) with PA (via C-terminus). Interacts (via C-terminus) with PB2 (via N-terminus); this interaction is essential for transcription initiation. Phosphorylated by host PRKCA.

It is found in the host nucleus. The protein localises to the host cytoplasm. It catalyses the reaction RNA(n) + a ribonucleoside 5'-triphosphate = RNA(n+1) + diphosphate. Its function is as follows. RNA-dependent RNA polymerase which is responsible for replication and transcription of virus RNA segments. The transcription of viral mRNAs occurs by a unique mechanism called cap-snatching. 5' methylated caps of cellular mRNAs are cleaved after 10-13 nucleotides by PA. In turn, these short capped RNAs are used as primers by PB1 for transcription of viral mRNAs. During virus replication, PB1 initiates RNA synthesis and copy vRNA into complementary RNA (cRNA) which in turn serves as a template for the production of more vRNAs. The protein is RNA-directed RNA polymerase catalytic subunit of Influenza A virus (strain A/Seal/Massachusetts/1/1980 H7N7).